The sequence spans 262 residues: Acyl-[acyl-carrier-protein]--UDP-N-acetylglucosamine O-acyltransferase (262 aa).

The protein belongs to the transferase hexapeptide repeat family. LpxA subfamily. In terms of assembly, homotrimer.

Its subcellular location is the cytoplasm. The enzyme catalyses a (3R)-hydroxyacyl-[ACP] + UDP-N-acetyl-alpha-D-glucosamine = a UDP-3-O-[(3R)-3-hydroxyacyl]-N-acetyl-alpha-D-glucosamine + holo-[ACP]. It participates in glycolipid biosynthesis; lipid IV(A) biosynthesis; lipid IV(A) from (3R)-3-hydroxytetradecanoyl-[acyl-carrier-protein] and UDP-N-acetyl-alpha-D-glucosamine: step 1/6. Its function is as follows. Involved in the biosynthesis of lipid A, a phosphorylated glycolipid that anchors the lipopolysaccharide to the outer membrane of the cell. This is Acyl-[acyl-carrier-protein]--UDP-N-acetylglucosamine O-acyltransferase from Sodalis glossinidius (strain morsitans).